A 209-amino-acid chain; its full sequence is Small ribosomal subunit protein uS4 (209 aa).

Residues 98–166 (RRLDNVVYRL…IKQAIELNKG (69 aa)) form the S4 RNA-binding domain.

It belongs to the universal ribosomal protein uS4 family. Part of the 30S ribosomal subunit. Contacts protein S5. The interaction surface between S4 and S5 is involved in control of translational fidelity.

Functionally, one of the primary rRNA binding proteins, it binds directly to 16S rRNA where it nucleates assembly of the body of the 30S subunit. Its function is as follows. With S5 and S12 plays an important role in translational accuracy. This is Small ribosomal subunit protein uS4 from Fervidobacterium nodosum (strain ATCC 35602 / DSM 5306 / Rt17-B1).